The following is a 440-amino-acid chain: Na(+)/H(+) antiporter NhaA (440 aa).

Helical transmembrane passes span 25-45, 76-96, 112-132, 141-161, 170-190, 194-214, 225-245, 312-332, 345-365, 378-398, and 414-434; these read FLHI…VALV, LHHV…GLEV, TLPI…YLSM, GWGI…AILG, VLLL…IAIG, SLDG…HFLS, VIVG…ATLI, HPWT…GVLI, VVIG…WLVI, WPIL…ALFI, and GVLV…LWTL.

It belongs to the NhaA Na(+)/H(+) (TC 2.A.33) antiporter family.

The protein resides in the cell inner membrane. It catalyses the reaction Na(+)(in) + 2 H(+)(out) = Na(+)(out) + 2 H(+)(in). Functionally, na(+)/H(+) antiporter that extrudes sodium in exchange for external protons. This is Na(+)/H(+) antiporter NhaA from Rhodopirellula baltica (strain DSM 10527 / NCIMB 13988 / SH1).